The chain runs to 74 residues: DNA-directed RNA polymerase subunit omega (74 aa).

It belongs to the RNA polymerase subunit omega family. As to quaternary structure, the RNAP catalytic core consists of 2 alpha, 1 beta, 1 beta' and 1 omega subunit. When a sigma factor is associated with the core the holoenzyme is formed, which can initiate transcription.

The catalysed reaction is RNA(n) + a ribonucleoside 5'-triphosphate = RNA(n+1) + diphosphate. In terms of biological role, promotes RNA polymerase assembly. Latches the N- and C-terminal regions of the beta' subunit thereby facilitating its interaction with the beta and alpha subunits. The polypeptide is DNA-directed RNA polymerase subunit omega (Hydrogenovibrio crunogenus (strain DSM 25203 / XCL-2) (Thiomicrospira crunogena)).